The following is a 599-amino-acid chain: Elongation factor 4 (599 aa).

The tr-type G domain occupies 5–187; it reads SHIRNFSIVA…SIVQNLPAPK (183 aa). Residues 17-22 and 134-137 each bind GTP; these read DHGKST and NKID.

It belongs to the TRAFAC class translation factor GTPase superfamily. Classic translation factor GTPase family. LepA subfamily.

It is found in the cell inner membrane. It carries out the reaction GTP + H2O = GDP + phosphate + H(+). Required for accurate and efficient protein synthesis under certain stress conditions. May act as a fidelity factor of the translation reaction, by catalyzing a one-codon backward translocation of tRNAs on improperly translocated ribosomes. Back-translocation proceeds from a post-translocation (POST) complex to a pre-translocation (PRE) complex, thus giving elongation factor G a second chance to translocate the tRNAs correctly. Binds to ribosomes in a GTP-dependent manner. The polypeptide is Elongation factor 4 (Roseobacter denitrificans (strain ATCC 33942 / OCh 114) (Erythrobacter sp. (strain OCh 114))).